A 457-amino-acid chain; its full sequence is 3-ketoacyl-CoA thiolase 5, peroxisomal (457 aa).

Residues 1–37 (MERAMERQKILLRHLNPVSSSNSSLKHEPSLLSPVNC) constitute a peroxisome transit peptide. C137 functions as the Acyl-thioester intermediate in the catalytic mechanism. Active-site proton acceptor residues include H394 and C426.

It belongs to the thiolase-like superfamily. Thiolase family. Homodimer. Expressed in seedlings and wounded leaves.

Its subcellular location is the peroxisome. The enzyme catalyses an acyl-CoA + acetyl-CoA = a 3-oxoacyl-CoA + CoA. Its pathway is lipid metabolism; fatty acid metabolism. In terms of biological role, probably involved in long chain fatty-acid beta-oxidation prior to gluconeogenesis during germination and subsequent seedling growth. Involved in systemic jasmonic acid (JA) biosynthesis after wounding and may be during senescence. This chain is 3-ketoacyl-CoA thiolase 5, peroxisomal (KAT5), found in Arabidopsis thaliana (Mouse-ear cress).